Consider the following 2298-residue polypeptide: Protein Ycf2 (2298 aa).

1652–1659 (GSIGTGRS) provides a ligand contact to ATP.

Belongs to the Ycf2 family.

Its subcellular location is the plastid. It is found in the chloroplast stroma. Its function is as follows. Probable ATPase of unknown function. Its presence in a non-photosynthetic plant (Epifagus virginiana) and experiments in tobacco indicate that it has an essential function which is probably not related to photosynthesis. The polypeptide is Protein Ycf2 (Aethionema cordifolium (Lebanon stonecress)).